A 181-amino-acid polypeptide reads, in one-letter code: CDP-diacylglycerol--glycerol-3-phosphate 3-phosphatidyltransferase (181 aa).

A run of 4 helical transmembrane segments spans residues Pro8–Ile28, Lys35–Ala55, Phe64–Leu84, and Ile148–Ile168.

The protein belongs to the CDP-alcohol phosphatidyltransferase class-I family.

The protein resides in the cell membrane. The catalysed reaction is a CDP-1,2-diacyl-sn-glycerol + sn-glycerol 3-phosphate = a 1,2-diacyl-sn-glycero-3-phospho-(1'-sn-glycero-3'-phosphate) + CMP + H(+). The protein operates within phospholipid metabolism; phosphatidylglycerol biosynthesis; phosphatidylglycerol from CDP-diacylglycerol: step 1/2. Functionally, this protein catalyzes the committed step to the synthesis of the acidic phospholipids. The sequence is that of CDP-diacylglycerol--glycerol-3-phosphate 3-phosphatidyltransferase (pgsA) from Rickettsia prowazekii (strain Madrid E).